The chain runs to 143 residues: Polyadenylate-binding protein-interacting protein 2 (143 aa).

The PAM2-like signature appears at 11–21 (TLNPNAPVFDP).

The sequence is that of Polyadenylate-binding protein-interacting protein 2 (CID2) from Arabidopsis thaliana (Mouse-ear cress).